The sequence spans 370 residues: Dual-specificity RNA methyltransferase RlmN (370 aa).

E93 functions as the Proton acceptor in the catalytic mechanism. In terms of domain architecture, Radical SAM core spans D99–D331. An intrachain disulfide couples C106 to C336. 3 residues coordinate [4Fe-4S] cluster: C113, C117, and C120. Residues G162–E163, S194, S216–H218, and N293 contribute to the S-adenosyl-L-methionine site. Residue C336 is the S-methylcysteine intermediate of the active site.

This sequence belongs to the radical SAM superfamily. RlmN family. [4Fe-4S] cluster serves as cofactor.

The protein resides in the cytoplasm. It catalyses the reaction adenosine(2503) in 23S rRNA + 2 reduced [2Fe-2S]-[ferredoxin] + 2 S-adenosyl-L-methionine = 2-methyladenosine(2503) in 23S rRNA + 5'-deoxyadenosine + L-methionine + 2 oxidized [2Fe-2S]-[ferredoxin] + S-adenosyl-L-homocysteine. The catalysed reaction is adenosine(37) in tRNA + 2 reduced [2Fe-2S]-[ferredoxin] + 2 S-adenosyl-L-methionine = 2-methyladenosine(37) in tRNA + 5'-deoxyadenosine + L-methionine + 2 oxidized [2Fe-2S]-[ferredoxin] + S-adenosyl-L-homocysteine. In terms of biological role, specifically methylates position 2 of adenine 2503 in 23S rRNA and position 2 of adenine 37 in tRNAs. m2A2503 modification seems to play a crucial role in the proofreading step occurring at the peptidyl transferase center and thus would serve to optimize ribosomal fidelity. In Coxiella burnetii (strain CbuK_Q154) (Coxiella burnetii (strain Q154)), this protein is Dual-specificity RNA methyltransferase RlmN.